We begin with the raw amino-acid sequence, 281 residues long: Bifunctional protein FolD (281 aa).

NADP(+) contacts are provided by residues 161–163 (GRS), serine 186, and isoleucine 227.

This sequence belongs to the tetrahydrofolate dehydrogenase/cyclohydrolase family. In terms of assembly, homodimer.

The catalysed reaction is (6R)-5,10-methylene-5,6,7,8-tetrahydrofolate + NADP(+) = (6R)-5,10-methenyltetrahydrofolate + NADPH. It catalyses the reaction (6R)-5,10-methenyltetrahydrofolate + H2O = (6R)-10-formyltetrahydrofolate + H(+). It participates in one-carbon metabolism; tetrahydrofolate interconversion. Functionally, catalyzes the oxidation of 5,10-methylenetetrahydrofolate to 5,10-methenyltetrahydrofolate and then the hydrolysis of 5,10-methenyltetrahydrofolate to 10-formyltetrahydrofolate. The chain is Bifunctional protein FolD from Brachyspira hyodysenteriae (strain ATCC 49526 / WA1).